The following is a 194-amino-acid chain: MESLLAVQGQDFVLTASSSSAVRGITVLKPDDDKSQILNSHNLMLYCGEAGDTTNFAEYIAANISLYTLRHNLNLSPEATASFTRKQLATSLRSRKPYQVNILLAGYETNLGKPELFWLDYLATCVRVPYACQGYSSFYCLSIFDRYYKPDLTIDEAVRIMKLCFDELKKRMPIDFKGFICKVVDKDGIREINI.

This sequence belongs to the peptidase T1B family. The 26S proteasome consists of a 20S proteasome core and two 19S regulatory subunits. The 20S proteasome core is composed of 28 subunits that are arranged in four stacked rings, resulting in a barrel-shaped structure. The two end rings are each formed by seven alpha subunits, and the two central rings are each formed by seven beta subunits. The catalytic chamber with the active sites is on the inside of the barrel.

It is found in the cytoplasm. It localises to the nucleus. Non-catalytic component of the proteasome, a multicatalytic proteinase complex which is characterized by its ability to cleave peptides with Arg, Phe, Tyr, Leu, and Glu adjacent to the leaving group at neutral or slightly basic pH. The proteasome has an ATP-dependent proteolytic activity. The sequence is that of Probable proteasome subunit beta type-4 from Schizosaccharomyces pombe (strain 972 / ATCC 24843) (Fission yeast).